Reading from the N-terminus, the 452-residue chain is LIM/homeobox protein lim-7 (452 aa).

LIM zinc-binding domains lie at Ala-54–Thr-116 and Arg-117–Pro-179. The tract at residues Ser-184–Val-268 is disordered. Low complexity-rich tracts occupy residues Asn-192–Asn-205 and Thr-217–Ser-227. A DNA-binding region (homeobox) is located at residues Ala-265–Gln-324. The segment at Gly-347 to Trp-376 is LIM interaction domain (LID).

As to quaternary structure, interacts (via LID domain) with ceh-14 (via LIM zinc-binding domains 1 and 2). In terms of tissue distribution, expressed in gonadal sheath cells, URA motoneurons, and 10 additional cells near the isthmus and terminal bulb of the pharynx. Expressed in the ALA and BDU cells.

It localises to the nucleus. Its function is as follows. Probable DNA-binding transcriptional activator. This chain is LIM/homeobox protein lim-7, found in Caenorhabditis elegans.